The chain runs to 652 residues: Acetyl-coenzyme A synthetase (652 aa).

CoA contacts are provided by residues 191-194, Thr-311, and Asn-335; that span reads RAGR. Residues 387–389, 411–416, Asp-500, and Arg-515 each bind ATP; these read GEP and DTWWQT. Ser-523 contacts CoA. Arg-526 contacts ATP. Mg(2+) is bound by residues Val-537, His-539, and Ile-542. Arg-584 provides a ligand contact to CoA. Lys-609 bears the N6-acetyllysine mark.

This sequence belongs to the ATP-dependent AMP-binding enzyme family. It depends on Mg(2+) as a cofactor. Post-translationally, acetylated. Deacetylation by the SIR2-homolog deacetylase activates the enzyme.

The enzyme catalyses acetate + ATP + CoA = acetyl-CoA + AMP + diphosphate. Functionally, catalyzes the conversion of acetate into acetyl-CoA (AcCoA), an essential intermediate at the junction of anabolic and catabolic pathways. Acs undergoes a two-step reaction. In the first half reaction, Acs combines acetate with ATP to form acetyl-adenylate (AcAMP) intermediate. In the second half reaction, it can then transfer the acetyl group from AcAMP to the sulfhydryl group of CoA, forming the product AcCoA. In terms of biological role, enables the cell to use acetate during aerobic growth to generate energy via the TCA cycle, and biosynthetic compounds via the glyoxylate shunt. Acetylates CheY, the response regulator involved in flagellar movement and chemotaxis. In Escherichia coli O6:H1 (strain CFT073 / ATCC 700928 / UPEC), this protein is Acetyl-coenzyme A synthetase.